Reading from the N-terminus, the 130-residue chain is UPF0102 protein RPE_0358 (130 aa).

This sequence belongs to the UPF0102 family.

The chain is UPF0102 protein RPE_0358 from Rhodopseudomonas palustris (strain BisA53).